Consider the following 153-residue polypeptide: Bursicon (153 aa).

The first 22 residues, 1-22 (MLLYHIVGASVLICLLNETAKA), serve as a signal peptide directing secretion. 5 cysteine pairs are disulfide-bonded: Cys-29-Cys-78, Cys-43-Cys-92, Cys-53-Cys-113, Cys-57-Cys-115, and Cys-75-Cys-118. Residues 29 to 119 (CQATPVIHFL…PLECMCRPCT (91 aa)) enclose the CTCK domain.

Heterodimer of burs and pburs.

It is found in the secreted. Its function is as follows. Final heterodimeric neurohormone released at the end of the molting cycle, involved in the sclerotization (tanning) of the insect cuticle, melanization and wing spreading. This is Bursicon from Apis mellifera (Honeybee).